The following is a 65-amino-acid chain: Large ribosomal subunit protein bL35 (65 aa).

Basic residues predominate over residues 1–45 (MPKMKSHSGAKKRFKKTGNGKIKRKKANKGHLLTKKNAKRKRQLR). The segment at 1-65 (MPKMKSHSGA…RDRIKRMLST (65 aa)) is disordered. A compositionally biased stretch (basic and acidic residues) spans 48–57 (VVVDDKANRD).

The protein belongs to the bacterial ribosomal protein bL35 family.

The sequence is that of Large ribosomal subunit protein bL35 from Salinibacter ruber (strain DSM 13855 / M31).